The primary structure comprises 338 residues: Holliday junction branch migration complex subunit RuvB (338 aa).

The segment at 1–181 (MDRIVEIEKV…FGMDFRLQFY (181 aa)) is large ATPase domain (RuvB-L). ATP contacts are provided by residues leucine 20, arginine 21, glycine 62, lysine 65, threonine 66, threonine 67, 128–130 (EDF), arginine 171, tyrosine 181, and arginine 218. Threonine 66 provides a ligand contact to Mg(2+). Positions 182-252 (STAELSRIIQ…RAKEGLNALG (71 aa)) are small ATPAse domain (RuvB-S). A head domain (RuvB-H) region spans residues 255–338 (SLGFDEMDIK…NRTKGLFDGE (84 aa)). The DNA site is built by arginine 309 and arginine 314.

This sequence belongs to the RuvB family. Homohexamer. Forms an RuvA(8)-RuvB(12)-Holliday junction (HJ) complex. HJ DNA is sandwiched between 2 RuvA tetramers; dsDNA enters through RuvA and exits via RuvB. An RuvB hexamer assembles on each DNA strand where it exits the tetramer. Each RuvB hexamer is contacted by two RuvA subunits (via domain III) on 2 adjacent RuvB subunits; this complex drives branch migration. In the full resolvosome a probable DNA-RuvA(4)-RuvB(12)-RuvC(2) complex forms which resolves the HJ.

It is found in the cytoplasm. The enzyme catalyses ATP + H2O = ADP + phosphate + H(+). The RuvA-RuvB-RuvC complex processes Holliday junction (HJ) DNA during genetic recombination and DNA repair, while the RuvA-RuvB complex plays an important role in the rescue of blocked DNA replication forks via replication fork reversal (RFR). RuvA specifically binds to HJ cruciform DNA, conferring on it an open structure. The RuvB hexamer acts as an ATP-dependent pump, pulling dsDNA into and through the RuvAB complex. RuvB forms 2 homohexamers on either side of HJ DNA bound by 1 or 2 RuvA tetramers; 4 subunits per hexamer contact DNA at a time. Coordinated motions by a converter formed by DNA-disengaged RuvB subunits stimulates ATP hydrolysis and nucleotide exchange. Immobilization of the converter enables RuvB to convert the ATP-contained energy into a lever motion, pulling 2 nucleotides of DNA out of the RuvA tetramer per ATP hydrolyzed, thus driving DNA branch migration. The RuvB motors rotate together with the DNA substrate, which together with the progressing nucleotide cycle form the mechanistic basis for DNA recombination by continuous HJ branch migration. Branch migration allows RuvC to scan DNA until it finds its consensus sequence, where it cleaves and resolves cruciform DNA. This chain is Holliday junction branch migration complex subunit RuvB, found in Campylobacter curvus (strain 525.92).